We begin with the raw amino-acid sequence, 300 residues long: Formamidopyrimidine-DNA glycosylase (300 aa).

The active-site Schiff-base intermediate with DNA is the proline 2. Glutamate 3 serves as the catalytic Proton donor. The active-site Proton donor; for beta-elimination activity is lysine 60. The DNA site is built by histidine 108, arginine 136, and arginine 181. The FPG-type zinc finger occupies 266 to 300; the sequence is WVYSRAGQPCRICNTPLEKIKLAGRSTHFCPQCQK. The active-site Proton donor; for delta-elimination activity is arginine 290.

This sequence belongs to the FPG family. In terms of assembly, monomer. The cofactor is Zn(2+).

The enzyme catalyses Hydrolysis of DNA containing ring-opened 7-methylguanine residues, releasing 2,6-diamino-4-hydroxy-5-(N-methyl)formamidopyrimidine.. It carries out the reaction 2'-deoxyribonucleotide-(2'-deoxyribose 5'-phosphate)-2'-deoxyribonucleotide-DNA = a 3'-end 2'-deoxyribonucleotide-(2,3-dehydro-2,3-deoxyribose 5'-phosphate)-DNA + a 5'-end 5'-phospho-2'-deoxyribonucleoside-DNA + H(+). In terms of biological role, involved in base excision repair of DNA damaged by oxidation or by mutagenic agents. Acts as a DNA glycosylase that recognizes and removes damaged bases. Has a preference for oxidized purines, such as 7,8-dihydro-8-oxoguanine (8-oxoG). Has AP (apurinic/apyrimidinic) lyase activity and introduces nicks in the DNA strand. Cleaves the DNA backbone by beta-delta elimination to generate a single-strand break at the site of the removed base with both 3'- and 5'-phosphates. In Trichodesmium erythraeum (strain IMS101), this protein is Formamidopyrimidine-DNA glycosylase.